We begin with the raw amino-acid sequence, 332 residues long: Probable farnesyl diphosphate synthase (332 aa).

3 residues coordinate isopentenyl diphosphate: lysine 75, arginine 78, and histidine 107. Mg(2+) is bound by residues aspartate 114 and aspartate 120. Arginine 125 serves as a coordination point for (2E)-geranyl diphosphate. Arginine 126 is an isopentenyl diphosphate binding site. Residues lysine 208, serine 209, glutamine 250, and lysine 267 each coordinate (2E)-geranyl diphosphate.

Belongs to the FPP/GGPP synthase family. Mg(2+) serves as cofactor.

It is found in the cytoplasm. It catalyses the reaction isopentenyl diphosphate + (2E)-geranyl diphosphate = (2E,6E)-farnesyl diphosphate + diphosphate. The polypeptide is Probable farnesyl diphosphate synthase (fppS) (Bradyrhizobium diazoefficiens (strain JCM 10833 / BCRC 13528 / IAM 13628 / NBRC 14792 / USDA 110)).